Here is a 506-residue protein sequence, read N- to C-terminus: Histidine ammonia-lyase (506 aa).

The 5-imidazolinone (Ala-Gly) cross-link spans 143 to 145 (ASG). 2,3-didehydroalanine (Ser) is present on serine 144.

This sequence belongs to the PAL/histidase family. Post-translationally, contains an active site 4-methylidene-imidazol-5-one (MIO), which is formed autocatalytically by cyclization and dehydration of residues Ala-Ser-Gly.

The protein resides in the cytoplasm. It catalyses the reaction L-histidine = trans-urocanate + NH4(+). Its pathway is amino-acid degradation; L-histidine degradation into L-glutamate; N-formimidoyl-L-glutamate from L-histidine: step 1/3. This chain is Histidine ammonia-lyase, found in Salmonella paratyphi B (strain ATCC BAA-1250 / SPB7).